The sequence spans 284 residues: Probable ADP-ribose 1''-phosphate phosphatase YML087W (284 aa).

Positions 23, 55, 80, and 90 each coordinate substrate. A Macro domain is found at 34 to 230; sequence ESIPHAYIQN…HISKELKNVL (197 aa). Active-site residues include N80 and D90. A disulfide bridge connects residues C128 and C136. H145 is a catalytic residue. Residues T148 and T195 each contribute to the substrate site.

In terms of assembly, homodimer.

The catalysed reaction is ADP-alpha-D-ribose 1''-phosphate + H2O = ADP-D-ribose + phosphate. Functionally, highly specific phosphatase involved in the metabolism of ADP-ribose 1''-phosphate (Appr1p) which is produced as a consequence of tRNA splicing. + phosphate. The chain is Probable ADP-ribose 1''-phosphate phosphatase YML087W from Saccharomyces cerevisiae (strain ATCC 204508 / S288c) (Baker's yeast).